Reading from the N-terminus, the 169-residue chain is MSVLQVLHIPDERLRKVAKPVEEVNAEIQRIVDDMFETMYAEEGIGLAATQVDIHQRIIVIDVSENRDERLVLINPELLEKSGETGIEEGCLSIPKQRALVPRAEKVKIRALDRDGKPFELEADGLLAICIQHEMDHLVGKLFMDYLSPLKQQRIRQKVEKLDRLKARA.

Fe cation-binding residues include Cys91 and His133. The active site involves Glu134. His137 is a Fe cation binding site.

The protein belongs to the polypeptide deformylase family. Fe(2+) is required as a cofactor.

The enzyme catalyses N-terminal N-formyl-L-methionyl-[peptide] + H2O = N-terminal L-methionyl-[peptide] + formate. Removes the formyl group from the N-terminal Met of newly synthesized proteins. Requires at least a dipeptide for an efficient rate of reaction. N-terminal L-methionine is a prerequisite for activity but the enzyme has broad specificity at other positions. The polypeptide is Peptide deformylase (Shigella boydii serotype 18 (strain CDC 3083-94 / BS512)).